Here is a 721-residue protein sequence, read N- to C-terminus: Glucans biosynthesis glucosyltransferase H (721 aa).

6 helical membrane passes run 53–75 (VLIMVATAVLSAAGIYEMYQVLQ), 85–107 (VVLVLFAALFAWVALSFVSALAG), 404–426 (GIGAYLTAPMWLAFLIAGILISL), 456–478 (WVFAGTMGLLILPKLLALFLVLI), 490–512 (LRTFGGVLLETMISALTAPVMMV), and 567–589 (WPLLLWMTPVIVGLLLAIPVALL).

It belongs to the glycosyltransferase 2 family. OpgH subfamily.

Its subcellular location is the cell inner membrane. It functions in the pathway glycan metabolism; osmoregulated periplasmic glucan (OPG) biosynthesis. Functionally, involved in the biosynthesis of osmoregulated periplasmic glucans (OPGs). In Rhodopseudomonas palustris (strain ATCC BAA-98 / CGA009), this protein is Glucans biosynthesis glucosyltransferase H.